Consider the following 512-residue polypeptide: Delta(14)-sterol reductase (512 aa).

8 consecutive transmembrane segments (helical) span residues I27–C47, A100–A120, A140–P160, Y172–L192, S242–A262, W278–S298, F324–A344, and A353–F373. NADP(+) is bound by residues K380, R384, L407, W412, and N419–Y420. 2 helical membrane passes run I418–G438 and M458–I478. NADP(+) is bound by residues D484, C488 to Y492, and Y499.

The protein belongs to the ERG4/ERG24 family.

Its subcellular location is the membrane. It carries out the reaction 4,4-dimethyl-5alpha-cholesta-8,24-dien-3beta-ol + NADP(+) = 4,4-dimethyl-5alpha-cholesta-8,14,24-trien-3beta-ol + NADPH + H(+). It participates in steroid biosynthesis; zymosterol biosynthesis; zymosterol from lanosterol: step 2/6. Functionally, reduces the C14=C15 double bond of 4,4-dimethyl-cholesta-8,14,24-trienol to produce 4,4-dimethyl-cholesta-8,24-dienol. This chain is Delta(14)-sterol reductase (ERG3), found in Septoria lycopersici (Tomato leaf spot fungus).